Reading from the N-terminus, the 900-residue chain is 3'-5' exonuclease DinG (900 aa).

The 154-residue stretch at 8-161 folds into the Exonuclease domain; sequence VVDLETTGNQ…DEDATTTALL (154 aa). In terms of domain architecture, Helicase ATP-binding spans 241-496; it reads SEVVKSLNLT…KAIDKLEQQR (256 aa). 276–283 contributes to the ATP binding site; the sequence is APLGSGKS. The short motif at 448 to 451 is the DEAH box element; it reads DEAH. A Helicase C-terminal domain is found at 713–893; sequence DYIQEYVTIT…QFSKLVNKIQ (181 aa).

It belongs to the helicase family. DinG subfamily. Type 2 sub-subfamily.

In terms of biological role, 3'-5' exonuclease. The chain is 3'-5' exonuclease DinG from Staphylococcus haemolyticus (strain JCSC1435).